A 523-amino-acid chain; its full sequence is Alpha,alpha-trehalose-phosphate synthase [UDP-forming] (523 aa).

Y98 and D152 together coordinate D-glucose 6-phosphate. Residues R288 and K293 each coordinate UDP. UDP-alpha-D-glucose-binding residues include R288 and K293. R326 is a binding site for D-glucose 6-phosphate. Residue 387-395 (DGMNLVSYE) coordinates UDP-alpha-D-glucose. Residue 391–395 (LVSYE) coordinates UDP. The segment at 503–523 (QQFNLGEQREEGRLEPGEFDD) is disordered. The span at 509–523 (EQREEGRLEPGEFDD) shows a compositional bias: basic and acidic residues.

This sequence belongs to the glycosyltransferase 20 family.

It carries out the reaction D-glucose 6-phosphate + UDP-alpha-D-glucose = alpha,alpha-trehalose 6-phosphate + UDP + H(+). The protein operates within carbohydrate biosynthesis. In terms of biological role, synthase catalytic subunit of the trehalose synthase complex that catalyzes the production of trehalose from glucose-6-phosphate and UDP-alpha-D-glucose in a two step process. The disaccharide trehalose serves as a storage carbohydrate that is mobilized during conidial germination. Trehalose also serves as a protectant for cell integrity during stress. The sequence is that of Alpha,alpha-trehalose-phosphate synthase [UDP-forming] from Botryotinia fuckeliana (strain B05.10) (Noble rot fungus).